The chain runs to 510 residues: GMP synthase [glutamine-hydrolyzing] (510 aa).

The region spanning 3–194 (QILILDFGSQ…ARVICGYKEK (192 aa)) is the Glutamine amidotransferase type-1 domain. Cysteine 80 functions as the Nucleophile in the catalytic mechanism. Residues histidine 168 and glutamate 170 contribute to the active site. The region spanning 195–385 (WTPASIMTAS…LGLGSEIVDI (191 aa)) is the GMPS ATP-PPase domain. An ATP-binding site is contributed by 222 to 228 (SGGVDSS).

Homodimer.

The catalysed reaction is XMP + L-glutamine + ATP + H2O = GMP + L-glutamate + AMP + diphosphate + 2 H(+). The protein operates within purine metabolism; GMP biosynthesis; GMP from XMP (L-Gln route): step 1/1. In terms of biological role, catalyzes the synthesis of GMP from XMP. The chain is GMP synthase [glutamine-hydrolyzing] from Elusimicrobium minutum (strain Pei191).